Here is a 497-residue protein sequence, read N- to C-terminus: uncharacterized protein (497 aa).

The segment covering Ile-44–Ile-74 has biased composition (basic and acidic residues). Disordered regions lie at residues Ile-44–Arg-95, Val-120–Asp-151, and Gly-195–Arg-227. Over residues Val-120–Ser-131 the composition is skewed to low complexity. Phosphoserine occurs at positions 123, 125, and 131. Thr-132 is modified (phosphothreonine). The segment covering Ala-213–Arg-227 has biased composition (low complexity). A Phosphothreonine modification is found at Thr-258. At Ser-310 the chain carries Phosphoserine. Residues Asn-367–Ser-385 are compositionally biased toward polar residues. Residues Asn-367–His-497 are disordered. A compositionally biased stretch (low complexity) spans Asn-400–Phe-409. The residue at position 436 (Ser-436) is a Phosphoserine. The segment covering Gly-448 to Ser-472 has biased composition (low complexity).

Its subcellular location is the cytoplasm. The protein resides in the nucleus. This is an uncharacterized protein from Schizosaccharomyces pombe (strain 972 / ATCC 24843) (Fission yeast).